Consider the following 393-residue polypeptide: MTTYSDKGEKPERGRFLHFHSVTFWVGNAKQAASYYCSKLGFEPLAYKGLETGSREVVSHVVKQGQIVFVFSSALNPWNKEMGDHLVKHGDGVKDIAFEVEDCDYIVQKARERGAKIVREPWVEQDKLGKVKFAVLQTYGDTTHTLVEKMNYTGRFLPGFEAPPFMDPQLSKLPSCSLEIIDHIVGNQPDQEMVSASEWYLKNLQFHRFWSVDDTQVHTEYSSLRSVVVANYEESIKMPINEPAPGKKKSQIQEYVDYNGGAGVQHIALKTKDIITAIRHLRERGVEFLAVPSTYYKQLREKLKMAKIRVKENIDILEELKILVDYDEKGYLLQIFTKPMQDRPTLFLEVIQRHNHQGFGAGNFNSLFKAFEEEQDLRGNLTDMEPNGVVSGM.

Thr2 is modified (N-acetylthreonine). VOC domains follow at residues 18–149 and 180–338; these read HFHS…LVEK and IIDH…IFTK. Lys132 is subject to N6-succinyllysine. A Fe cation-binding site is contributed by His183. A phosphoserine mark is found at Ser211, Ser226, and Ser250. Positions 266 and 349 each coordinate Fe cation.

Belongs to the 4HPPD family. Homodimer. Requires Fe cation as cofactor.

The protein localises to the cytoplasm. It is found in the endoplasmic reticulum membrane. Its subcellular location is the golgi apparatus membrane. The enzyme catalyses 3-(4-hydroxyphenyl)pyruvate + O2 = homogentisate + CO2. It functions in the pathway amino-acid degradation; L-phenylalanine degradation; acetoacetate and fumarate from L-phenylalanine: step 3/6. Its function is as follows. Catalyzes the conversion of 4-hydroxyphenylpyruvic acid to homogentisic acid, one of the steps in tyrosine catabolism. This chain is 4-hydroxyphenylpyruvate dioxygenase (HPD), found in Bos taurus (Bovine).